Consider the following 548-residue polypeptide: uncharacterized protein (548 aa).

Residues Lys-8–Lys-200 form the DhaL domain.

This is an uncharacterized protein from Staphylococcus aureus (strain MRSA252).